Here is a 387-residue protein sequence, read N- to C-terminus: 3-ketoacyl-CoA thiolase (387 aa).

The active-site Acyl-thioester intermediate is the Cys91. Active-site proton acceptor residues include His343 and Cys373.

Belongs to the thiolase-like superfamily. Thiolase family. Heterotetramer of two alpha chains (FadB) and two beta chains (FadA).

It localises to the cytoplasm. The catalysed reaction is an acyl-CoA + acetyl-CoA = a 3-oxoacyl-CoA + CoA. The protein operates within lipid metabolism; fatty acid beta-oxidation. In terms of biological role, catalyzes the final step of fatty acid oxidation in which acetyl-CoA is released and the CoA ester of a fatty acid two carbons shorter is formed. This is 3-ketoacyl-CoA thiolase from Escherichia coli O139:H28 (strain E24377A / ETEC).